The primary structure comprises 174 residues: Crossover junction endodeoxyribonuclease RuvC (174 aa).

Residues D8, E68, and D140 contribute to the active site. Mg(2+) is bound by residues D8, E68, and D140.

It belongs to the RuvC family. As to quaternary structure, homodimer which binds Holliday junction (HJ) DNA. The HJ becomes 2-fold symmetrical on binding to RuvC with unstacked arms; it has a different conformation from HJ DNA in complex with RuvA. In the full resolvosome a probable DNA-RuvA(4)-RuvB(12)-RuvC(2) complex forms which resolves the HJ. Requires Mg(2+) as cofactor.

The protein resides in the cytoplasm. It catalyses the reaction Endonucleolytic cleavage at a junction such as a reciprocal single-stranded crossover between two homologous DNA duplexes (Holliday junction).. Functionally, the RuvA-RuvB-RuvC complex processes Holliday junction (HJ) DNA during genetic recombination and DNA repair. Endonuclease that resolves HJ intermediates. Cleaves cruciform DNA by making single-stranded nicks across the HJ at symmetrical positions within the homologous arms, yielding a 5'-phosphate and a 3'-hydroxyl group; requires a central core of homology in the junction. The consensus cleavage sequence is 5'-(A/T)TT(C/G)-3'. Cleavage occurs on the 3'-side of the TT dinucleotide at the point of strand exchange. HJ branch migration catalyzed by RuvA-RuvB allows RuvC to scan DNA until it finds its consensus sequence, where it cleaves and resolves the cruciform DNA. The chain is Crossover junction endodeoxyribonuclease RuvC from Legionella pneumophila (strain Corby).